The chain runs to 162 residues: Phosphopantetheine adenylyltransferase (162 aa).

Substrate is bound at residue Ser-9. ATP-binding positions include Ser-9 to Phe-10 and His-17. Positions 41, 73, and 87 each coordinate substrate. ATP-binding positions include Gly-88–Arg-90, Glu-98, and Tyr-123–Ser-129.

It belongs to the bacterial CoaD family. In terms of assembly, homohexamer. The cofactor is Mg(2+).

The protein resides in the cytoplasm. It carries out the reaction (R)-4'-phosphopantetheine + ATP + H(+) = 3'-dephospho-CoA + diphosphate. It functions in the pathway cofactor biosynthesis; coenzyme A biosynthesis; CoA from (R)-pantothenate: step 4/5. Reversibly transfers an adenylyl group from ATP to 4'-phosphopantetheine, yielding dephospho-CoA (dPCoA) and pyrophosphate. This Symbiobacterium thermophilum (strain DSM 24528 / JCM 14929 / IAM 14863 / T) protein is Phosphopantetheine adenylyltransferase.